Reading from the N-terminus, the 314-residue chain is ATP synthase gamma chain (314 aa).

The protein belongs to the ATPase gamma chain family. F-type ATPases have 2 components, CF(1) - the catalytic core - and CF(0) - the membrane proton channel. CF(1) has five subunits: alpha(3), beta(3), gamma(1), delta(1), epsilon(1). CF(0) has three main subunits: a, b and c.

Its subcellular location is the cell membrane. Functionally, produces ATP from ADP in the presence of a proton gradient across the membrane. The gamma chain is believed to be important in regulating ATPase activity and the flow of protons through the CF(0) complex. This is ATP synthase gamma chain from Lactiplantibacillus plantarum (strain ATCC BAA-793 / NCIMB 8826 / WCFS1) (Lactobacillus plantarum).